We begin with the raw amino-acid sequence, 242 residues long: Universal stress protein PHOS32 (242 aa).

The N-terminal 43 residues, 1 to 43 (MNPADSDHPQLPNIKIHHPPSPRHSHHHHSSSTPSSAATPTPT), are a transit peptide targeting the chloroplast. The tract at residues 1–45 (MNPADSDHPQLPNIKIHHPPSPRHSHHHHSSSTPSSAATPTPTAG) is disordered. Residues 15 to 30 (KIHHPPSPRHSHHHHS) are compositionally biased toward basic residues. P19 contacts ATP. The residue at position 21 (S21) is a Phosphoserine; by MAPK3 and MAPK6. Over residues 31-44 (SSTPSSAATPTPTA) the composition is skewed to low complexity. ATP contacts are provided by residues V83, 168–178 (GSRGFGAEKKR), and 186–188 (SVS). A Phosphoserine modification is found at S219.

This sequence belongs to the universal stress protein A family. Phosphorylated by MAPK3 and MAPK6 after pathogenic elicitation (e.g. bacterial flg22, Phytophthora infestans zoospores and xylanase).

The protein localises to the plastid. The protein resides in the chloroplast. The sequence is that of Universal stress protein PHOS32 from Arabidopsis thaliana (Mouse-ear cress).